A 578-amino-acid chain; its full sequence is 15-cis-phytoene desaturase, chloroplastic/chromoplastic (578 aa).

The N-terminal 87 residues, 1–87 (MDTGCLSSMN…PLENTINFLE (87 aa)), are a transit peptide targeting the chloroplast and chromoplast. Residues A115, 134-135 (EA), K142, 159-160 (HI), and Y165 contribute to the FAD site. Position 300 (R300) interacts with substrate. Residues I342 and D531 each contribute to the FAD site. A539 contacts substrate. An FAD-binding site is contributed by M541.

Belongs to the carotenoid/retinoid oxidoreductase family. Homotetramer. Homotetramer is the active form of the enzyme. The cofactor is FAD.

The protein resides in the plastid. It is found in the chloroplast. Its subcellular location is the chromoplast. The protein localises to the membrane. The enzyme catalyses 2 a plastoquinone + 15-cis-phytoene = 9,9',15-tri-cis-zeta-carotene + 2 a plastoquinol. Its pathway is carotenoid biosynthesis; lycopene biosynthesis. Inhibited by the herbicide norflurazon (NFZ). Converts phytoene into zeta-carotene via the intermediary of phytofluene by the symmetrical introduction of two double bonds at the C-11 and C-11' positions of phytoene with a concomitant isomerization of two neighboring double bonds at the C9 and C9' positions from trans to cis. Active with decylplastoquinone (DPQ) as substrate. Also active with other benzoquinones, which are strongly preferred over naphthoquinones as substrates. The polypeptide is 15-cis-phytoene desaturase, chloroplastic/chromoplastic (PDS1) (Oryza sativa subsp. indica (Rice)).